Reading from the N-terminus, the 430-residue chain is Asparagine--tRNA ligase (430 aa).

This sequence belongs to the class-II aminoacyl-tRNA synthetase family. Homodimer.

The protein resides in the cytoplasm. It catalyses the reaction tRNA(Asn) + L-asparagine + ATP = L-asparaginyl-tRNA(Asn) + AMP + diphosphate + H(+). The chain is Asparagine--tRNA ligase from Geobacillus thermodenitrificans (strain NG80-2).